We begin with the raw amino-acid sequence, 428 residues long: Trigger factor (428 aa).

A PPIase FKBP-type domain is found at 166–250 (GDIVTFDFKG…IKNIKEKILP (85 aa)).

Belongs to the FKBP-type PPIase family. Tig subfamily.

It is found in the cytoplasm. It catalyses the reaction [protein]-peptidylproline (omega=180) = [protein]-peptidylproline (omega=0). Involved in protein export. Acts as a chaperone by maintaining the newly synthesized protein in an open conformation. Functions as a peptidyl-prolyl cis-trans isomerase. The protein is Trigger factor of Mycoplasma capricolum subsp. capricolum (strain California kid / ATCC 27343 / NCTC 10154).